The chain runs to 379 residues: Protein FAM53B (379 aa).

Disordered regions lie at residues 206–257 (CPAE…HKQR) and 302–348 (AQND…AGKE). Residues 212–236 (SPESTPELQRRSGQSGLARSRSQPC) show a composition bias toward polar residues. The span at 239–249 (NHQKIGVKRRR) shows a compositional bias: basic residues. The Nuclear localization signal signature appears at 246–249 (KRRR). Over residues 326–342 (QSDSSSADALIHQSESS) the composition is skewed to polar residues.

Belongs to the FAM53 family. As to quaternary structure, interacts with ctnnb1. As to expression, mainly expressed in proliferating tissues.

It is found in the nucleus. Functionally, acts as a regulator of Wnt signaling pathway by regulating beta-catenin (ctnnb1) nuclear localization. Required for appendage regeneration by regulating cell proliferation. In Danio rerio (Zebrafish), this protein is Protein FAM53B.